Reading from the N-terminus, the 441-residue chain is Protein dcd1A (441 aa).

A signal peptide spans 1–23 (MKIFNKLIFLIIQCILIISVTNA). 4 N-linked (GlcNAc...) asparagine glycosylation sites follow: asparagine 45, asparagine 261, asparagine 308, and asparagine 419.

It is found in the secreted. The polypeptide is Protein dcd1A (dcd1A) (Dictyostelium discoideum (Social amoeba)).